Consider the following 185-residue polypeptide: Elongation factor P (185 aa).

Belongs to the elongation factor P family.

The protein localises to the cytoplasm. It functions in the pathway protein biosynthesis; polypeptide chain elongation. Involved in peptide bond synthesis. Stimulates efficient translation and peptide-bond synthesis on native or reconstituted 70S ribosomes in vitro. Probably functions indirectly by altering the affinity of the ribosome for aminoacyl-tRNA, thus increasing their reactivity as acceptors for peptidyl transferase. This is Elongation factor P from Bacillus cereus (strain ATCC 10987 / NRS 248).